The chain runs to 130 residues: Large ribosomal subunit protein bL17 (130 aa).

This sequence belongs to the bacterial ribosomal protein bL17 family. Part of the 50S ribosomal subunit. Contacts protein L32.

This Buchnera aphidicola subsp. Acyrthosiphon pisum (strain APS) (Acyrthosiphon pisum symbiotic bacterium) protein is Large ribosomal subunit protein bL17.